Reading from the N-terminus, the 410-residue chain is MRPENNLRLRLFQTMKFIALERLGLFVPIPGIDQKLFSSDYSNNAISNLLNVFDNNQAPKLSVFALGIIPYINATITIQILSSAFPALKKLQSEEGEIGKKKLNKITKYLSFCFAFIESLAIVLRLQKYAFDWNLYFIVQTTLILISGAMLVMWLADNISYKGIGTGASVIIFVNIASAFAKFLLNQLFVHSIKFLDFASYFALIVFSIACIVFVQEAIRKVPIISAKQLDSTSFYSNDYFLPLRINQGGVMPIILASSLLALVDYVIRYGLSTLQAVYFINDILPFKILFLLLYSAFIIFFNYLYCSLVLNCFELSNNLKKASVVIPSIRPGKMTEKFFKDTLDNLTLFGSGFLAFIVLAPNFLEFVFHIRVFKGLAVSSLLIVVGVAIDLIKQSKTYVIAKNYENMVH.

Helical transmembrane passes span 61-81, 106-126, 135-155, 170-190, 195-215, 248-268, 289-309, 349-369, and 373-393; these read LSVF…IQIL, ITKY…VLRL, LYFI…VMWL, VIIF…QLFV, FLDF…IVFV, QGGV…DYVI, ILFL…YCSL, LFGS…EFVF, and VFKG…IDLI.

It belongs to the SecY/SEC61-alpha family. As to quaternary structure, component of the plastid Sec protein translocase complex, which is composed of at least SecY and SecE.

Its subcellular location is the plastid. The protein localises to the chloroplast thylakoid membrane. Functionally, the central subunit of the protein translocation channel SecYE. Consists of two halves formed by TMs 1-5 and 6-10. These two domains form a lateral gate at the front which open onto the bilayer between TMs 2 and 7, and are clamped together by SecE at the back. The channel is closed by both a pore ring composed of hydrophobic SecY resides and a short helix (helix 2A) on the extracellular side of the membrane which forms a plug. The chain is Protein translocase subunit SecY from Cyanidium caldarium (Red alga).